The following is a 462-amino-acid chain: L-seryl-tRNA(Sec) selenium transferase (462 aa).

K295 is modified (N6-(pyridoxal phosphate)lysine).

It belongs to the SelA family. As to quaternary structure, homodecamer; pentamer of dimers. Binds only one seryl-tRNA(Sec) per dimer. Pyridoxal 5'-phosphate is required as a cofactor.

Its subcellular location is the cytoplasm. The catalysed reaction is L-seryl-tRNA(Sec) + selenophosphate + H(+) = L-selenocysteinyl-tRNA(Sec) + phosphate. It participates in aminoacyl-tRNA biosynthesis; selenocysteinyl-tRNA(Sec) biosynthesis; selenocysteinyl-tRNA(Sec) from L-seryl-tRNA(Sec) (bacterial route): step 1/1. Converts seryl-tRNA(Sec) to selenocysteinyl-tRNA(Sec) required for selenoprotein biosynthesis. This Klebsiella pneumoniae (strain 342) protein is L-seryl-tRNA(Sec) selenium transferase.